Reading from the N-terminus, the 511-residue chain is Mannosyl-oligosaccharide alpha-1,2-mannosidase (511 aa).

The signal sequence occupies residues 1-35 (MRLPVSFPLTVLSLLGSTIAHPYGETEAVLRSEPK). Asn-182 carries N-linked (GlcNAc...) asparagine glycosylation. Cys-332 and Cys-361 are disulfide-bonded. The N-linked (GlcNAc...) asparagine glycan is linked to Asn-366. Asp-375 serves as the catalytic Proton donor. An N-linked (GlcNAc...) asparagine glycan is attached at Asn-438. Thr-501 is a Ca(2+) binding site.

Belongs to the glycosyl hydrolase 47 family. In terms of assembly, homodimer. Ca(2+) is required as a cofactor.

It is found in the secreted. It catalyses the reaction N(4)-(alpha-D-Man-(1-&gt;2)-alpha-D-Man-(1-&gt;2)-alpha-D-Man-(1-&gt;3)-[alpha-D-Man-(1-&gt;2)-alpha-D-Man-(1-&gt;3)-[alpha-D-Man-(1-&gt;2)-alpha-D-Man-(1-&gt;6)]-alpha-D-Man-(1-&gt;6)]-beta-D-Man-(1-&gt;4)-beta-D-GlcNAc-(1-&gt;4)-beta-D-GlcNAc)-L-asparaginyl-[protein] (N-glucan mannose isomer 9A1,2,3B1,2,3) + 4 H2O = N(4)-(alpha-D-Man-(1-&gt;3)-[alpha-D-Man-(1-&gt;3)-[alpha-D-Man-(1-&gt;6)]-alpha-D-Man-(1-&gt;6)]-beta-D-Man-(1-&gt;4)-beta-D-GlcNAc-(1-&gt;4)-beta-D-GlcNAc)-L-asparaginyl-[protein] (N-glucan mannose isomer 5A1,2) + 4 beta-D-mannose. The enzyme catalyses N(4)-(alpha-D-Man-(1-&gt;2)-alpha-D-Man-(1-&gt;2)-alpha-D-Man-(1-&gt;3)-[alpha-D-Man-(1-&gt;3)-[alpha-D-Man-(1-&gt;2)-alpha-D-Man-(1-&gt;6)]-alpha-D-Man-(1-&gt;6)]-beta-D-Man-(1-&gt;4)-beta-D-GlcNAc-(1-&gt;4)-beta-D-GlcNAc)-L-asparaginyl-[protein] (N-glucan mannose isomer 8A1,2,3B1,3) + 3 H2O = N(4)-(alpha-D-Man-(1-&gt;3)-[alpha-D-Man-(1-&gt;3)-[alpha-D-Man-(1-&gt;6)]-alpha-D-Man-(1-&gt;6)]-beta-D-Man-(1-&gt;4)-beta-D-GlcNAc-(1-&gt;4)-beta-D-GlcNAc)-L-asparaginyl-[protein] (N-glucan mannose isomer 5A1,2) + 3 beta-D-mannose. It participates in protein modification; protein glycosylation. Its function is as follows. Involved in the maturation of Asn-linked oligosaccharides. Progressively trim alpha-1,2-linked mannose residues from Man(9)GlcNAc(2) to produce Man(5)GlcNAc(2). In Penicillium citrinum, this protein is Mannosyl-oligosaccharide alpha-1,2-mannosidase (MSDC).